A 336-amino-acid polypeptide reads, in one-letter code: Holliday junction branch migration complex subunit RuvB (336 aa).

Residues 4-185 (ADRLISADIQ…FGIVQRLEFY (182 aa)) form a large ATPase domain (RuvB-L) region. ATP is bound by residues I24, R25, G66, K69, T70, T71, 132-134 (EDY), R175, Y185, and R222. T70 is a binding site for Mg(2+). Residues 186–256 (NVDDLQHIVA…IASKALDMLN (71 aa)) form a small ATPAse domain (RuvB-S) region. The segment at 259–336 (AAGFDYLDRK…RHFNRIMEAP (78 aa)) is head domain (RuvB-H). 3 residues coordinate DNA: R295, R314, and R319.

It belongs to the RuvB family. As to quaternary structure, homohexamer. Forms an RuvA(8)-RuvB(12)-Holliday junction (HJ) complex. HJ DNA is sandwiched between 2 RuvA tetramers; dsDNA enters through RuvA and exits via RuvB. An RuvB hexamer assembles on each DNA strand where it exits the tetramer. Each RuvB hexamer is contacted by two RuvA subunits (via domain III) on 2 adjacent RuvB subunits; this complex drives branch migration. In the full resolvosome a probable DNA-RuvA(4)-RuvB(12)-RuvC(2) complex forms which resolves the HJ.

The protein localises to the cytoplasm. It catalyses the reaction ATP + H2O = ADP + phosphate + H(+). Its function is as follows. The RuvA-RuvB-RuvC complex processes Holliday junction (HJ) DNA during genetic recombination and DNA repair, while the RuvA-RuvB complex plays an important role in the rescue of blocked DNA replication forks via replication fork reversal (RFR). RuvA specifically binds to HJ cruciform DNA, conferring on it an open structure. The RuvB hexamer acts as an ATP-dependent pump, pulling dsDNA into and through the RuvAB complex. RuvB forms 2 homohexamers on either side of HJ DNA bound by 1 or 2 RuvA tetramers; 4 subunits per hexamer contact DNA at a time. Coordinated motions by a converter formed by DNA-disengaged RuvB subunits stimulates ATP hydrolysis and nucleotide exchange. Immobilization of the converter enables RuvB to convert the ATP-contained energy into a lever motion, pulling 2 nucleotides of DNA out of the RuvA tetramer per ATP hydrolyzed, thus driving DNA branch migration. The RuvB motors rotate together with the DNA substrate, which together with the progressing nucleotide cycle form the mechanistic basis for DNA recombination by continuous HJ branch migration. Branch migration allows RuvC to scan DNA until it finds its consensus sequence, where it cleaves and resolves cruciform DNA. The polypeptide is Holliday junction branch migration complex subunit RuvB (Proteus mirabilis (strain HI4320)).